The following is a 335-amino-acid chain: Prepilin leader peptidase/N-methyltransferase (335 aa).

Residues 13–33 (LFAVFLFVLGLCVGSFLNVVI) form a helical membrane-spanning segment. Residues Cys-49, Cys-52, Cys-74, and Cys-77 each contribute to the Zn(2+) site. The next 5 helical transmembrane spans lie at 105–125 (WTYE…LAFI), 131–151 (ILPL…AFPL), 206–226 (LLGV…LMLL), 258–278 (PGLP…VQPI), and 299–319 (IPFG…GPWL).

The protein belongs to the peptidase A24 family. The cofactor is Zn(2+).

It is found in the cell inner membrane. The enzyme catalyses Typically cleaves a -Gly-|-Phe- bond to release an N-terminal, basic peptide of 5-8 residues from type IV prepilin, and then N-methylates the new N-terminal amino group, the methyl donor being S-adenosyl-L-methionine.. Its function is as follows. Plays an essential role in type IV pili and type II pseudopili formation by proteolytically removing the leader sequence from substrate proteins and subsequently monomethylating the alpha-amino group of the newly exposed N-terminal phenylalanine. This Myxococcus xanthus (strain DK1622) protein is Prepilin leader peptidase/N-methyltransferase (pilD).